Reading from the N-terminus, the 176-residue chain is Ribosome rescue factor SmrB (176 aa).

The disordered stretch occupies residues 29-51 (TIIQQPKKNTKQKEIKRSNREAS). The span at 39–51 (KQKEIKRSNREAS) shows a compositional bias: basic and acidic residues. The Smr domain maps to 97-172 (LDMHGMTQQE…GDGALLVLLS (76 aa)).

This sequence belongs to the SmrB family. As to quaternary structure, associates with collided ribosomes, but not with correctly translating polysomes.

In terms of biological role, acts as a ribosome collision sensor. Detects stalled/collided disomes (pairs of ribosomes where the leading ribosome is stalled and a second ribosome has collided with it) and endonucleolytically cleaves mRNA at the 5' boundary of the stalled ribosome. Stalled/collided disomes form a new interface (primarily via the 30S subunits) that binds SmrB. Cleaved mRNA becomes available for tmRNA ligation, leading to ribosomal subunit dissociation and rescue of stalled ribosomes. The chain is Ribosome rescue factor SmrB from Vibrio parahaemolyticus serotype O3:K6 (strain RIMD 2210633).